The following is an 81-amino-acid chain: uncharacterized protein (81 aa).

The transit peptide at 1 to 20 (MYSRVLSVAAIVTMALAVQA) directs the protein to the mitochondrion. The disordered stretch occupies residues 27-53 (YGNTTNSTGTTNGTNGTNTTTSSTATQ). The segment covering 28-53 (GNTTNSTGTTNGTNGTNTTTSSTATQ) has biased composition (low complexity). A helical membrane pass occupies residues 59–79 (ITNFSSGAFVIAMIAVACSVM).

The protein resides in the mitochondrion membrane. This is an uncharacterized protein from Schizosaccharomyces pombe (strain 972 / ATCC 24843) (Fission yeast).